Here is a 270-residue protein sequence, read N- to C-terminus: MDLAHVKDNHVDLYRILHIHVNDNEHLNSVTPTLINKQFRKLSLTLHPDKSNESDLNITRDRWDNLQSAYRILSEHKKEYDIWYQRTFLHSNRELLEKLEISEKAKKEKLISYDEIEKIQRYGQTLRKLVHFEIPISDWRNPSFTENTDDLNKLTETCLFRIKLVKRKEYNNEQKLNEWFRKIDIPITVQYYSENNDQREDDLVVYASARNVQTTIEILRTIENEKELHPDILEFTPAVEFEHFSFKEKVELDPSLGSIIYNSSDNPIIM.

The 73-residue stretch at 12 to 84 (DLYRILHIHV…EHKKEYDIWY (73 aa)) folds into the J domain.

The protein belongs to the DnaJ family. Associated with the spliceosome.

The protein localises to the cytoplasm. The protein resides in the nucleus. Its function is as follows. Involved in pre-mRNA splicing. May be involved in endoplasmic reticulum-associated protein degradation (ERAD) and required for growth at low and high temperatures. This chain is Pre-mRNA-splicing factor CWC23 (CWC23), found in Kluyveromyces lactis (strain ATCC 8585 / CBS 2359 / DSM 70799 / NBRC 1267 / NRRL Y-1140 / WM37) (Yeast).